Reading from the N-terminus, the 552-residue chain is Protein FAM234A (552 aa).

Over residues 1 to 22 (MLDHKDLEAEIHPLKNEERKSQ) the composition is skewed to basic and acidic residues. The disordered stretch occupies residues 1–40 (MLDHKDLEAEIHPLKNEERKSQENLGNPSKNEDNVKSAPP). Over 1–49 (MLDHKDLEAEIHPLKNEERKSQENLGNPSKNEDNVKSAPPQSRLSRCRA) the chain is Cytoplasmic. S21 is modified (phosphoserine). The chain crosses the membrane as a helical; Signal-anchor for type II membrane protein span at residues 50 to 70 (AAFFLSLFLCLFVVFVVSFVI). Residues 71 to 552 (PCPDRPASQR…FSRLRYQSEA (482 aa)) lie on the Extracellular side of the membrane. 4 N-linked (GlcNAc...) asparagine glycosylation sites follow: N116, N314, N389, and N473.

It belongs to the FAM234 family.

The protein resides in the membrane. The polypeptide is Protein FAM234A (Homo sapiens (Human)).